Reading from the N-terminus, the 105-residue chain is 5,5'-dehydrodivanillate O-demethylase ferredoxin subunit (105 aa).

The 2Fe-2S ferredoxin-type domain maps to 2 to 105 (AQLKVVTRDG…GMTVTIAPED (104 aa)). 4 residues coordinate [2Fe-2S] cluster: Cys40, Cys46, Cys49, and Cys86.

The protein belongs to the adrenodoxin/putidaredoxin family. In terms of assembly, monomer. The three-component monooxygenase is composed of an oxygenase (LigXa), a ferredoxin (LigXc) and a ferredoxin reductase (LigXd). The cofactor is [2Fe-2S] cluster.

The enzyme catalyses 5,5'-dehydrodivanillate + NADH + O2 + H(+) = 2,2',3-trihydroxy-3'-methoxy-5,5'-dicarboxybiphenyl + formaldehyde + NAD(+) + H2O. Its function is as follows. Involved in the catabolism of 5,5'-dehydrodivanillate (DDVA), an intermediate in the biodegradation of lignin. Part of a three-component monooxygenase that catalyzes the O-demethylation of DDVA, leading to the formation of 2,2',3-trihydroxy-3'-methoxy-5,5'-dicarboxybiphenyl (OH-DDVA). LigXc probably functions as an intermediate electron transfer protein between LigXd and LigXa. The polypeptide is 5,5'-dehydrodivanillate O-demethylase ferredoxin subunit (Sphingobium sp. (strain NBRC 103272 / SYK-6)).